Reading from the N-terminus, the 316-residue chain is Transcription initiation factor IIB (316 aa).

The segment at 11 to 42 adopts a TFIIB-type zinc-finger fold; the sequence is PKVTCPNHPDALLVEDYRAGDMICSECGLVVG. Cysteine 15, histidine 18, cysteine 34, and cysteine 37 together coordinate Zn(2+). A run of 2 repeats spans residues 124-200 and 218-294.

The protein belongs to the TFIIB family.

Its subcellular location is the nucleus. The protein localises to the chromosome. It catalyses the reaction L-lysyl-[protein] + acetyl-CoA = N(6)-acetyl-L-lysyl-[protein] + CoA + H(+). Functionally, general transcription factor that plays a role in transcription initiation by RNA polymerase II (Pol II). Involved in the pre-initiation complex (PIC) formation and Pol II recruitment at promoter DNA. Together with the TATA box-bound TBP forms the core initiation complex and provides a bridge between TBP and the Pol II-TFIIF complex. Released from the PIC early following the onset of transcription during the initiation and elongation transition and reassociates with TBP during the next transcription cycle. Associates with chromatin to core promoter-specific regions. Binds to two distinct DNA core promoter consensus sequence elements in a TBP-independent manner; these IIB-recognition elements (BREs) are localized immediately upstream (BREu), 5'-[GC][GC][GA]CGCC-3', and downstream (BREd), 5'-[GA]T[TGA][TG][GT][TG][TG]-3', of the TATA box element. Modulates transcription start site selection. Also exhibits autoacetyltransferase activity that contributes to the activated transcription. This is Transcription initiation factor IIB from Xenopus laevis (African clawed frog).